The primary structure comprises 251 residues: Cholesterol 25-hydroxylase-like protein (251 aa).

The next 3 membrane-spanning stretches (helical) occupy residues 22–42 (FFPVLFSITVYLSFCLPFVLL), 69–89 (WSCLALSLYNHVVYIFPLSVL), and 108–128 (VVWDLAACLLLFDFQYFVWHL). The Fatty acid hydroxylase domain occupies 113–247 (AACLLLFDFQ…FTHWDKLFGT (135 aa)). The Histidine box-1 signature appears at 126–130 (WHLLH). The Histidine box-2 motif lies at 141–145 (HKVHH). Residues 222–228 (HHDVHHQ) carry the Histidine box-3 motif.

The protein belongs to the sterol desaturase family. Fe cation serves as cofactor.

Its subcellular location is the endoplasmic reticulum membrane. It carries out the reaction cholesterol + AH2 + O2 = 25-hydroxycholesterol + A + H2O. The catalysed reaction is cholesterol + NADPH + O2 + H(+) = 25-hydroxycholesterol + NADP(+) + H2O. Catalyzes the formation of 25-hydroxycholesterol from cholesterol, leading to repress cholesterol biosynthetic enzymes. Plays a key role in cell positioning and movement in lymphoid tissues: 25-hydroxycholesterol is an intermediate in biosynthesis of 7-alpha,25-dihydroxycholesterol (7-alpha,25-OHC), an oxysterol that acts as a ligand for the G protein-coupled receptor GPR183/EBI2, a chemotactic receptor for a number of lymphoid cells. May play an important role in regulating lipid metabolism by synthesizing a corepressor that blocks sterol regulatory element binding protein (SREBP) processing. In testis, production of 25-hydroxycholesterol by macrophages may play a role in Leydig cell differentiation. The sequence is that of Cholesterol 25-hydroxylase-like protein (ch25h) from Danio rerio (Zebrafish).